A 442-amino-acid polypeptide reads, in one-letter code: Protein PHYTOCHROME KINASE SUBSTRATE 2 (442 aa).

Positions 110 to 130 (IFVGPKQSSKNSSETPSLRSE) are disordered. Positions 121-130 (SSETPSLRSE) are enriched in low complexity. 2 positions are modified to phosphoserine: S239 and S245. Residues 394–442 (VSGDSYTSMNRTPSYVPRFPVEANPTSTETRRRISSSSVSHTQSPFLYT) form a disordered region. A compositionally biased stretch (polar residues) spans 397-406 (DSYTSMNRTP). The segment covering 428–442 (SSSSVSHTQSPFLYT) has biased composition (low complexity).

The protein belongs to the PKS family. In terms of assembly, interacts with PKS1, RPT3, PHOT1 and PHOT2. Expressed in leaves, with the strongest expression on edges of the laminas. Not found in roots.

It localises to the cell membrane. Functionally, acts predominantly in the phot1 pathway. Involved in the leaf positioning and also in the phot2 pathway controlling the leaf flattening. Component of the network that modulates the very low-fluence response (VLFR) branch of phyA signaling. Regulates phytochrome-mediated photomorphogenesis and hypocotyl phototropism. May act by controlling auxin homeostasis. This chain is Protein PHYTOCHROME KINASE SUBSTRATE 2 (PKS2), found in Arabidopsis thaliana (Mouse-ear cress).